Reading from the N-terminus, the 269-residue chain is Putative 12-oxophytodienoate reductase-like protein 2A (269 aa).

FMN is bound by residues 28–30 (PLT) and glutamine 103. A substrate-binding site is contributed by 175 to 178 (HGAH). The active-site Proton donor is the tyrosine 180. Arginine 227 serves as a coordination point for FMN.

Belongs to the NADH:flavin oxidoreductase/NADH oxidase family. It depends on FMN as a cofactor.

In terms of biological role, putative oxophytodienoate reductase that may be involved in the biosynthesis or metabolism of oxylipin signaling molecules. In Arabidopsis thaliana (Mouse-ear cress), this protein is Putative 12-oxophytodienoate reductase-like protein 2A.